The following is a 3564-amino-acid chain: CUB and sushi domain-containing protein 1 (3564 aa).

Residues 1 to 29 (MTAWRKFKSLLLPLVLAVLCAGLLTAAKG) form the signal peptide. Topologically, residues 30-3487 (QNCGGLVQGP…NHYQGTSSGS (3458 aa)) are extracellular. Intrachain disulfides connect C32–C58, C145–C185, C171–C202, C208–C234, C349–C389, C375–C406, C411–C437, C527–C567, C553–C580, and C584–C610. One can recognise a CUB 1 domain in the interval 32-140 (CGGLVQGPNG…QGFKAMYEVL (109 aa)). 2 N-linked (GlcNAc...) asparagine glycosylation sites follow: N40 and N57. In terms of domain architecture, Sushi 1 spans 143–204 (HTCGNPGEIL…WDFPAPFCRA (62 aa)). Positions 208–312 (CGGTLRGTSG…KGFNAQFQVK (105 aa)) constitute a CUB 2 domain. One can recognise a Sushi 2 domain in the interval 347–408 (DMCPDPGIPD…WNDHRPICRA (62 aa)). In terms of domain architecture, CUB 3 spans 411 to 522 (CGSNLRGPSG…PGFKAVYQEI (112 aa)). Positions 525-582 (GGCGDPGIPAYGKRTGSSFLHGDTLTFECQAAFELVGERVITCQKNNQWSGNKPSCVF) constitute a Sushi 3 domain. Residues 584–692 (CFFNFTAPSG…RGFNITYTTF (109 aa)) form the CUB 4 domain. 2 N-linked (GlcNAc...) asparagine glycosylation sites follow: N587 and N686. One can recognise a Sushi 4 domain in the interval 695–756 (NECHDPGIPV…WSSTVPRCEA (62 aa)). 6 disulfides stabilise this stretch: C697–C738, C723–C754, C758–C784, C873–C913, C899–C926, and C930–C956. In terms of domain architecture, CUB 5 spans 758–866 (CGGHLTASSG…VGFLIHYESV (109 aa)). In terms of domain architecture, Sushi 5 spans 871 to 928 (DSCLDPGIPVNGQRHGSNFGIRSTVTFSCDPGYTLSDDEPLVCEKNHQWNHALPSCDA). Residues 930 to 1040 (CGGYIHGKSG…EGFNITFAEY (111 aa)) enclose the CUB 6 domain. N-linked (GlcNAc...) asparagine glycans are attached at residues N955, N1015, and N1034. One can recognise a Sushi 6 domain in the interval 1043–1102 (EPCDDPGVPAFSRRIGFQFGVGDTLAFTCFQGYRLEGATKLTCLGGGRRVWSAPLPRCVA). 3 disulfide bridges follow: C1045-C1085, C1071-C1100, and C1104-C1130. One can recognise a CUB 7 domain in the interval 1104-1212 (CGASVKGNEG…QGFQLTYTSF (109 aa)). Residues N1184 and N1197 are each glycosylated (N-linked (GlcNAc...) asparagine). The 61-residue stretch at 1215-1275 (VKCEDPGIPN…WDKPMPSCVA (61 aa)) folds into the Sushi 7 domain. Disulfide bonds link C1217–C1258, C1244–C1273, C1277–C1304, C1391–C1431, C1417–C1447, C1451–C1477, C1564–C1604, C1590–C1621, C1625–C1651, C1741–C1781, C1767–C1798, and C1802–C1828. Positions 1277–1386 (CGGLVHAATS…SGFSIQFSTS (110 aa)) constitute a CUB 8 domain. The region spanning 1389–1449 (STCNDPGMPQ…WQPDPPSCIA (61 aa)) is the Sushi 8 domain. N-linked (GlcNAc...) asparagine glycosylation occurs at N1399. The region spanning 1451–1559 (CGGNLTGPAG…SGFAIEFKEK (109 aa)) is the CUB 9 domain. Residues N1454 and N1572 are each glycosylated (N-linked (GlcNAc...) asparagine). In terms of domain architecture, Sushi 9 spans 1562–1623 (EACFDPGNIM…WDRALPACQA (62 aa)). Positions 1625-1733 (CGGQYTGSEG…RGFHFVYQAV (109 aa)) constitute a CUB 10 domain. A glycan (N-linked (GlcNAc...) asparagine) is linked at N1644. In terms of domain architecture, Sushi 10 spans 1739–1800 (TQCSSVPEPR…WNDTIPSCVV (62 aa)). 3 N-linked (GlcNAc...) asparagine glycosylation sites follow: N1792, N1805, and N1882. Positions 1802–1910 (CSGNFTQRRG…AGFHLEYKTV (109 aa)) constitute a CUB 11 domain. Residues 1913–1972 (AACQEPALPSNGIKIGDRYMVNDVLSFQCEPGYTLQGRSHISCMPGTVRRWNYPSPLCIA) enclose the Sushi 11 domain. 3 disulfides stabilise this stretch: C1915-C1955, C1941-C1970, and C1974-C2000. The 109-residue stretch at 1974–2082 (CGGTLTSMSG…QGFKLSYQAY (109 aa)) folds into the CUB 12 domain. A glycan (N-linked (GlcNAc...) asparagine) is linked at N2018. The 60-residue stretch at 2085-2144 (QNCPDPPAFQNGFMINSDYSVGQSISFECYPGYILLGHPVLTCQHGTDRNWNYPFPRCDA) folds into the Sushi 12 domain. Disulfide bonds link C2087–C2127, C2113–C2142, and C2146–C2172. The CUB 13 domain occupies 2146–2257 (CGYNVTSQNG…LNFHAFQLKR (112 aa)). N-linked (GlcNAc...) asparagine glycans are attached at residues N2149, N2154, and N2187. The Sushi 13 domain maps to 2256 to 2317 (KRCPPPPAVP…FQGSPPTCEA (62 aa)). Intrachain disulfides connect C2258/C2300, C2286/C2315, and C2319/C2347. Positions 2319–2430 (CPANEVRTES…KGFKIRYAAP (112 aa)) constitute a CUB 14 domain. N-linked (GlcNAc...) asparagine glycans are attached at residues N2358, N2394, N2400, N2445, N2470, and N2503. 15 Sushi domains span residues 2430-2492 (PYCS…LCQA), 2493-2554 (VSCG…TCKP), 2555-2619 (VPCP…RCKV), 2620-2677 (ISCG…RCLA), 2678-2735 (GHCG…VCVP), 2736-2793 (ITCG…ICRV), 2794-2856 (VNCS…KCLA), 2857-2914 (ISCG…HCSG), 2918-2975 (GFCG…VCEA), 2976-3034 (VSCG…DCTI), 3035-3094 (ISCG…LCKA), 3095-3152 (VLCN…QCLP), 3153-3210 (VFCG…TCID), 3214-3272 (TACP…ECIP), and 3273-3332 (HACR…VCKS). 12 cysteine pairs are disulfide-bonded: C2432/C2473, C2459/C2490, C2495/C2537, C2521/C2552, C2557/C2602, C2588/C2617, C2622/C2662, C2648/C2675, C2680/C2720, C2706/C2733, C2738/C2778, and C2764/C2791. N2605 is a glycosylation site (N-linked (GlcNAc...) asparagine). 2 N-linked (GlcNAc...) asparagine glycosylation sites follow: N2750 and N2761. N2795 carries N-linked (GlcNAc...) asparagine glycosylation. 18 disulfide bridges follow: C2796-C2841, C2827-C2854, C2859-C2899, C2885-C2912, C2920-C2960, C2946-C2973, C2978-C3019, C3005-C3032, C3037-C3079, C3063-C3092, C3097-C3137, C3123-C3150, C3155-C3195, C3181-C3208, C3216-C3257, C3243-C3270, C3275-C3317, and C3302-C3330. N-linked (GlcNAc...) asparagine glycosylation occurs at N2894. An N-linked (GlcNAc...) asparagine glycan is attached at N2963. N-linked (GlcNAc...) asparagine glycosylation is found at N3022, N3056, and N3086. Residues N3228 and N3260 are each glycosylated (N-linked (GlcNAc...) asparagine). 3 N-linked (GlcNAc...) asparagine glycosylation sites follow: N3339, N3379, and N3386. The chain crosses the membrane as a helical span at residues 3488–3508 (VAAAILVPFFALILSGFAFYL). The Cytoplasmic segment spans residues 3509–3564 (YKHRTRPKVQYNGYAGHENSNGQASFENPMYDTNLKPTEAKAVRFDTTLNTVCTVV).

It belongs to the CSMD family.

The protein localises to the membrane. The polypeptide is CUB and sushi domain-containing protein 1 (Csmd1) (Mus musculus (Mouse)).